The primary structure comprises 304 residues: Cytochrome c biogenesis protein CcsA (304 aa).

8 consecutive transmembrane segments (helical) span residues 11-31 (SLGF…FWAV), 37-57 (AGLV…QLIL), 63-83 (GHFP…ACTL), 96-116 (IVAA…SFAL), 141-161 (VIMV…AVLV), 212-232 (TITV…VWAN), 246-263 (TWAL…HTRL), and 275-295 (VAVV…LLGI).

It belongs to the CcmF/CycK/Ccl1/NrfE/CcsA family. In terms of assembly, may interact with ccs1.

The protein resides in the cellular thylakoid membrane. Required during biogenesis of c-type cytochromes (cytochrome c6 and cytochrome f) at the step of heme attachment. The protein is Cytochrome c biogenesis protein CcsA of Synechococcus sp. (strain CC9605).